A 136-amino-acid chain; its full sequence is Large ribosomal subunit protein uL16 (136 aa).

Belongs to the universal ribosomal protein uL16 family. In terms of assembly, part of the 50S ribosomal subunit.

Binds 23S rRNA and is also seen to make contacts with the A and possibly P site tRNAs. The sequence is that of Large ribosomal subunit protein uL16 from Psychromonas ingrahamii (strain DSM 17664 / CCUG 51855 / 37).